Reading from the N-terminus, the 110-residue chain is Ribonuclease P protein component 1 (110 aa).

This sequence belongs to the eukaryotic/archaeal RNase P protein component 1 family. As to quaternary structure, consists of a catalytic RNA component and at least 4-5 protein subunits.

It localises to the cytoplasm. It catalyses the reaction Endonucleolytic cleavage of RNA, removing 5'-extranucleotides from tRNA precursor.. Functionally, part of ribonuclease P, a protein complex that generates mature tRNA molecules by cleaving their 5'-ends. The chain is Ribonuclease P protein component 1 from Methanosarcina acetivorans (strain ATCC 35395 / DSM 2834 / JCM 12185 / C2A).